Here is a 334-residue protein sequence, read N- to C-terminus: Spermidine synthase 1 (334 aa).

The interval 1-37 (MAAPENTLHSTDSPLKRQREDEVNGVSDTLSKEPQPN) is disordered. The span at 26–37 (VSDTLSKEPQPN) shows a compositional bias: polar residues. The PABS domain occupies 44 to 281 (PGWFSEISPM…GMIGFMLCST (238 aa)). Glutamine 75 is a binding site for S-adenosyl 3-(methylsulfanyl)propylamine. Residue tyrosine 105 coordinates putrescine. S-adenosyl 3-(methylsulfanyl)propylamine contacts are provided by residues glutamine 106, aspartate 130, glutamate 150, 181-182 (DG), and aspartate 200. The active-site Proton acceptor is aspartate 200. Putrescine contacts are provided by residues 200 to 203 (DSSD) and tyrosine 269.

Belongs to the spermidine/spermine synthase family.

The catalysed reaction is S-adenosyl 3-(methylsulfanyl)propylamine + putrescine = S-methyl-5'-thioadenosine + spermidine + H(+). Its pathway is amine and polyamine biosynthesis; spermidine biosynthesis; spermidine from putrescine: step 1/1. This is Spermidine synthase 1 (SPDSYN1) from Pisum sativum (Garden pea).